A 381-amino-acid chain; its full sequence is 8-amino-7-oxononanoate synthase (381 aa).

R27 is a binding site for substrate. 105 to 106 (GY) is a pyridoxal 5'-phosphate binding site. Position 130 (H130) interacts with substrate. Pyridoxal 5'-phosphate-binding positions include S176, 201 to 204 (DEAH), and 232 to 235 (TLSK). K235 is modified (N6-(pyridoxal phosphate)lysine). Substrate is bound at residue T345.

Belongs to the class-II pyridoxal-phosphate-dependent aminotransferase family. BioF subfamily. In terms of assembly, homodimer. It depends on pyridoxal 5'-phosphate as a cofactor.

It carries out the reaction 6-carboxyhexanoyl-[ACP] + L-alanine + H(+) = (8S)-8-amino-7-oxononanoate + holo-[ACP] + CO2. Its pathway is cofactor biosynthesis; biotin biosynthesis. Its function is as follows. Catalyzes the decarboxylative condensation of pimeloyl-[acyl-carrier protein] and L-alanine to produce 8-amino-7-oxononanoate (AON), [acyl-carrier protein], and carbon dioxide. In Mycolicibacterium paratuberculosis (strain ATCC BAA-968 / K-10) (Mycobacterium paratuberculosis), this protein is 8-amino-7-oxononanoate synthase.